Here is a 294-residue protein sequence, read N- to C-terminus: Acetylglutamate kinase (294 aa).

Substrate-binding positions include Gly67 to Gly68, Arg89, and Asn193.

It belongs to the acetylglutamate kinase family. ArgB subfamily.

It is found in the cytoplasm. The catalysed reaction is N-acetyl-L-glutamate + ATP = N-acetyl-L-glutamyl 5-phosphate + ADP. It functions in the pathway amino-acid biosynthesis; L-arginine biosynthesis; N(2)-acetyl-L-ornithine from L-glutamate: step 2/4. Functionally, catalyzes the ATP-dependent phosphorylation of N-acetyl-L-glutamate. The protein is Acetylglutamate kinase of Leptospira interrogans serogroup Icterohaemorrhagiae serovar copenhageni (strain Fiocruz L1-130).